Reading from the N-terminus, the 98-residue chain is Small ribosomal subunit protein uS17 (98 aa).

The tract at residues 1–21 is disordered; it reads MADQKGPKYTPAAEKPRGRRK. Residue K96 forms an Isoglutamyl lysine isopeptide (Lys-Gln) (interchain with Q-Cter in protein Pup) linkage.

The protein belongs to the universal ribosomal protein uS17 family. As to quaternary structure, part of the 30S ribosomal subunit.

One of the primary rRNA binding proteins, it binds specifically to the 5'-end of 16S ribosomal RNA. This Mycolicibacterium smegmatis (strain ATCC 700084 / mc(2)155) (Mycobacterium smegmatis) protein is Small ribosomal subunit protein uS17 (rpsQ).